Reading from the N-terminus, the 434-residue chain is Nicotinate phosphoribosyltransferase (434 aa).

Residue His-242 is modified to Phosphohistidine; by autocatalysis.

The protein belongs to the NAPRTase family. Post-translationally, transiently phosphorylated on a His residue during the reaction cycle. Phosphorylation strongly increases the affinity for substrates and increases the rate of nicotinate D-ribonucleotide production. Dephosphorylation regenerates the low-affinity form of the enzyme, leading to product release.

The catalysed reaction is nicotinate + 5-phospho-alpha-D-ribose 1-diphosphate + ATP + H2O = nicotinate beta-D-ribonucleotide + ADP + phosphate + diphosphate. The protein operates within cofactor biosynthesis; NAD(+) biosynthesis; nicotinate D-ribonucleotide from nicotinate: step 1/1. Functionally, catalyzes the synthesis of beta-nicotinate D-ribonucleotide from nicotinate and 5-phospho-D-ribose 1-phosphate at the expense of ATP. In Bartonella quintana (strain Toulouse) (Rochalimaea quintana), this protein is Nicotinate phosphoribosyltransferase.